The primary structure comprises 38 residues: MKIRSSIKKRSSGCQIVRRKGVLYVINKKNPRFKQRQG.

It belongs to the bacterial ribosomal protein bL36 family.

This is Large ribosomal subunit protein bL36 from Amoebophilus asiaticus (strain 5a2).